The following is a 171-amino-acid chain: NADH-quinone oxidoreductase subunit C (171 aa).

This sequence belongs to the complex I 30 kDa subunit family. As to quaternary structure, NDH-1 is composed of 14 different subunits. Subunits NuoB, C, D, E, F, and G constitute the peripheral sector of the complex.

The protein localises to the cell membrane. The catalysed reaction is a quinone + NADH + 5 H(+)(in) = a quinol + NAD(+) + 4 H(+)(out). Functionally, NDH-1 shuttles electrons from NADH, via FMN and iron-sulfur (Fe-S) centers, to quinones in the respiratory chain. The immediate electron acceptor for the enzyme in this species is believed to be ubiquinone. Couples the redox reaction to proton translocation (for every two electrons transferred, four hydrogen ions are translocated across the cytoplasmic membrane), and thus conserves the redox energy in a proton gradient. The chain is NADH-quinone oxidoreductase subunit C from Herpetosiphon aurantiacus (strain ATCC 23779 / DSM 785 / 114-95).